The following is a 322-amino-acid chain: Cytochrome c biogenesis protein CcsA (322 aa).

The next 7 helical transmembrane spans lie at 9-29, 44-64, 71-91, 143-163, 226-246, 255-275, and 287-307; these read IFTHISFSIVSIVIIIHLITL, GMIVTFLCLTGLLITRWIYSG, LYESLIFLSWSFSLIHIVPYF, MILSYAALLCGSLLSVALLVI, VISLGFIFLTIGILSGAVWAN, WDPKETWAFITWIVFAIYLHI, and AIVATLGFLIIWICYFGVNLL.

Belongs to the CcmF/CycK/Ccl1/NrfE/CcsA family. May interact with Ccs1.

Its subcellular location is the plastid. It localises to the chloroplast thylakoid membrane. In terms of biological role, required during biogenesis of c-type cytochromes (cytochrome c6 and cytochrome f) at the step of heme attachment. In Lactuca sativa (Garden lettuce), this protein is Cytochrome c biogenesis protein CcsA.